Reading from the N-terminus, the 486-residue chain is Malonate-semialdehyde dehydrogenase 1 (486 aa).

Positions 154, 178, 181, 182, and 231 each coordinate NAD(+). Residue Cys-286 is the Nucleophile of the active site. Residue Glu-386 participates in NAD(+) binding.

The protein belongs to the aldehyde dehydrogenase family. IolA subfamily. In terms of assembly, homotetramer.

The catalysed reaction is 3-oxopropanoate + NAD(+) + CoA + H2O = hydrogencarbonate + acetyl-CoA + NADH + H(+). The enzyme catalyses 2-methyl-3-oxopropanoate + NAD(+) + CoA + H2O = propanoyl-CoA + hydrogencarbonate + NADH + H(+). Its pathway is polyol metabolism; myo-inositol degradation into acetyl-CoA; acetyl-CoA from myo-inositol: step 7/7. Functionally, catalyzes the oxidation of malonate semialdehyde (MSA) and methylmalonate semialdehyde (MMSA) into acetyl-CoA and propanoyl-CoA, respectively. Is involved in a myo-inositol catabolic pathway. Bicarbonate, and not CO2, is the end-product of the enzymatic reaction. This chain is Malonate-semialdehyde dehydrogenase 1, found in Oceanobacillus iheyensis (strain DSM 14371 / CIP 107618 / JCM 11309 / KCTC 3954 / HTE831).